Reading from the N-terminus, the 418-residue chain is Actin-related protein 3-A (418 aa).

It belongs to the actin family. ARP3 subfamily. In terms of assembly, component of the Arp2/3 complex composed of actr2/arp2, actr3/arp3, arpc1 (arpc1a or arpc1b), arpc2, arpc3, arpc4 and arpc5.

The protein resides in the cytoplasm. The protein localises to the cytoskeleton. Its subcellular location is the cell projection. It localises to the nucleus. Functionally, ATP-binding component of the Arp2/3 complex, a multiprotein complex that mediates actin polymerization upon stimulation by nucleation-promoting factor (NPF). The Arp2/3 complex mediates the formation of branched actin networks in the cytoplasm, providing the force for cell motility. Seems to contact the pointed end of the daughter actin filament. In addition to its role in the cytoplasmic cytoskeleton, the Arp2/3 complex also promotes actin polymerization in the nucleus, thereby regulating gene transcription and repair of damaged DNA. The Arp2/3 complex promotes homologous recombination (HR) repair in response to DNA damage by promoting nuclear actin polymerization, leading to drive motility of double-strand breaks (DSBs). This chain is Actin-related protein 3-A, found in Xenopus laevis (African clawed frog).